Reading from the N-terminus, the 501-residue chain is DNA nucleotidylexotransferase (501 aa).

The Nuclear localization signal signature appears at 11-17; the sequence is KKRKRPV. Residues 24–121 form the BRCT domain; sequence QVEVKFKEVT…RPVRVETRHS (98 aa). An involved in DNA binding region spans residues 249-253; sequence VGPKT. A 2'-deoxyribonucleoside 5'-triphosphate is bound by residues 324–329 and 333–336; these read GFRRGK and HDVD. Residues Asp-334, Asp-336, and Asp-426 each contribute to the Mg(2+) site. 441-442 serves as a coordination point for a 2'-deoxyribonucleoside 5'-triphosphate; sequence GW.

Belongs to the DNA polymerase type-X family. Mg(2+) is required as a cofactor.

The protein localises to the nucleus. It catalyses the reaction DNA(n) + a 2'-deoxyribonucleoside 5'-triphosphate = DNA(n+1) + diphosphate. Template-independent DNA polymerase which catalyzes the random addition of deoxynucleoside 5'-triphosphate to the 3'-end of a DNA initiator. One of the in vivo functions of this enzyme is the addition of nucleotides at the junction (N region) of rearranged Ig heavy chain and T-cell receptor gene segments during the maturation of B- and T-cells. In Oncorhynchus mykiss (Rainbow trout), this protein is DNA nucleotidylexotransferase (dntt).